We begin with the raw amino-acid sequence, 103 residues long: Large ribosomal subunit protein bL21 (103 aa).

Belongs to the bacterial ribosomal protein bL21 family. Part of the 50S ribosomal subunit. Contacts protein L20.

Its function is as follows. This protein binds to 23S rRNA in the presence of protein L20. The chain is Large ribosomal subunit protein bL21 from Shewanella sp. (strain MR-7).